Reading from the N-terminus, the 139-residue chain is Endoribonuclease YbeY (139 aa).

Residues H107, H111, and D117 each contribute to the Zn(2+) site.

The protein belongs to the endoribonuclease YbeY family. It depends on Zn(2+) as a cofactor.

The protein localises to the cytoplasm. Its function is as follows. Single strand-specific metallo-endoribonuclease involved in late-stage 70S ribosome quality control and in maturation of the 3' terminus of the 16S rRNA. This chain is Endoribonuclease YbeY, found in Azobacteroides pseudotrichonymphae genomovar. CFP2.